Here is a 259-residue protein sequence, read N- to C-terminus: Probable dihydroorotate dehydrogenase B (NAD(+)), electron transfer subunit (259 aa).

The FAD-binding FR-type domain maps to 1 to 89; the sequence is MLPLNVTITQ…RGPFGKGFTL (89 aa). [2Fe-2S] cluster contacts are provided by Cys211, Cys216, Cys219, and Cys229.

It belongs to the PyrK family. Heterotetramer of 2 PyrK and 2 PyrD type B subunits. It depends on [2Fe-2S] cluster as a cofactor. FAD is required as a cofactor.

It participates in pyrimidine metabolism; UMP biosynthesis via de novo pathway; orotate from (S)-dihydroorotate (NAD(+) route): step 1/1. In terms of biological role, responsible for channeling the electrons from the oxidation of dihydroorotate from the FMN redox center in the PyrD type B subunit to the ultimate electron acceptor NAD(+). In Methanosarcina acetivorans (strain ATCC 35395 / DSM 2834 / JCM 12185 / C2A), this protein is Probable dihydroorotate dehydrogenase B (NAD(+)), electron transfer subunit.